The primary structure comprises 36 residues: Photosystem I reaction center subunit VIII (36 aa).

Residues 9-29 (ILTPVVTLVFPGLMFALFFVL) form a helical membrane-spanning segment.

This sequence belongs to the PsaI family.

It localises to the plastid. The protein resides in the chloroplast thylakoid membrane. In terms of biological role, may help in the organization of the PsaL subunit. This Emiliania huxleyi (Coccolithophore) protein is Photosystem I reaction center subunit VIII.